The primary structure comprises 59 residues: Small integral membrane protein 30 (59 aa).

The signal sequence occupies residues 1–24 (MNSVSTQLILVLASLLLILPVVEA). Topologically, residues 25–29 (VEAGD) are extracellular. A helical membrane pass occupies residues 30 to 50 (AIALLLGVVLSITGICACLGI). At 51–59 (YARKRNGQM) the chain is on the cytoplasmic side.

Interacts (via transmembrane domain) with antiviral protein MAVS (via transmembrane domain); the interaction disrupts MAVS interaction with RIGI and inhibits MAVS aggregation, resulting in the repression of type I interferon signaling and innate immune responses.

The protein localises to the endoplasmic reticulum membrane. It localises to the mitochondrion membrane. Its function is as follows. Negatively regulates antiviral innate immune responses. Disrupts the interaction of antiviral protein MAVS with innate immune receptor RIGI and inhibits MAVS aggregation, resulting in the repression of type I interferon signaling and innate immune responses. This Mus musculus (Mouse) protein is Small integral membrane protein 30.